A 311-amino-acid polypeptide reads, in one-letter code: Probable deoxyhypusine synthase (311 aa).

The active-site Nucleophile is Lys-284.

It belongs to the deoxyhypusine synthase family. It depends on NAD(+) as a cofactor.

The catalysed reaction is [eIF5A protein]-L-lysine + spermidine = [eIF5A protein]-deoxyhypusine + propane-1,3-diamine. It participates in protein modification; eIF5A hypusination. Functionally, catalyzes the NAD-dependent oxidative cleavage of spermidine and the subsequent transfer of the butylamine moiety of spermidine to the epsilon-amino group of a specific lysine residue of the eIF-5A precursor protein to form the intermediate deoxyhypusine residue. In Sulfolobus acidocaldarius (strain ATCC 33909 / DSM 639 / JCM 8929 / NBRC 15157 / NCIMB 11770), this protein is Probable deoxyhypusine synthase.